Reading from the N-terminus, the 526-residue chain is Glucose-6-phosphate isomerase (526 aa).

The active-site Proton donor is glutamate 343. Residues histidine 374 and lysine 494 contribute to the active site.

The protein belongs to the GPI family.

The protein resides in the cytoplasm. It catalyses the reaction alpha-D-glucose 6-phosphate = beta-D-fructose 6-phosphate. The protein operates within carbohydrate biosynthesis; gluconeogenesis. Its pathway is carbohydrate degradation; glycolysis; D-glyceraldehyde 3-phosphate and glycerone phosphate from D-glucose: step 2/4. Its function is as follows. Catalyzes the reversible isomerization of glucose-6-phosphate to fructose-6-phosphate. In Dechloromonas aromatica (strain RCB), this protein is Glucose-6-phosphate isomerase.